The primary structure comprises 247 residues: ATP synthase subunit a (247 aa).

6 helical membrane passes run 24 to 44, 82 to 102, 112 to 132, 141 to 161, 194 to 214, and 219 to 239; these read IAFT…SLLM, FFPF…VGII, IIVT…YGFY, LFVP…IEVI, MLGA…ALVV, and LELL…CIYI.

It belongs to the ATPase A chain family. As to quaternary structure, F-type ATPases have 2 components, CF(1) - the catalytic core - and CF(0) - the membrane proton channel. CF(1) has five subunits: alpha(3), beta(3), gamma(1), delta(1), epsilon(1). CF(0) has three main subunits: a(1), b(2) and c(9-12). The alpha and beta chains form an alternating ring which encloses part of the gamma chain. CF(1) is attached to CF(0) by a central stalk formed by the gamma and epsilon chains, while a peripheral stalk is formed by the delta and b chains.

It is found in the cell inner membrane. Functionally, key component of the proton channel; it plays a direct role in the translocation of protons across the membrane. The chain is ATP synthase subunit a from Nitrobacter winogradskyi (strain ATCC 25391 / DSM 10237 / CIP 104748 / NCIMB 11846 / Nb-255).